Reading from the N-terminus, the 88-residue chain is Apolipoprotein C-I (88 aa).

Positions 1-26 (MRLFIALPVLIVVVAMALEGPAPAQA) are cleaved as a signal peptide.

This sequence belongs to the apolipoprotein C1 family.

The protein resides in the secreted. Inhibitor of lipoprotein binding to the low density lipoprotein (LDL) receptor, LDL receptor-related protein, and very low density lipoprotein (VLDL) receptor. Associates with high density lipoproteins (HDL) and the triacylglycerol-rich lipoproteins in the plasma and makes up about 10% of the protein of the VLDL and 2% of that of HDL. Appears to interfere directly with fatty acid uptake and is also the major plasma inhibitor of cholesteryl ester transfer protein (CETP). Modulates the interaction of APOE with beta-migrating VLDL and inhibits binding of beta-VLDL to the LDL receptor-related protein. Binds free fatty acids and reduces their intracellular esterification. The sequence is that of Apolipoprotein C-I (Apoc1) from Grammomys surdaster (African woodland thicket rat).